The primary structure comprises 129 residues: Large ribosomal subunit protein bL12 (129 aa).

This sequence belongs to the bacterial ribosomal protein bL12 family. Homodimer. Part of the ribosomal stalk of the 50S ribosomal subunit. Forms a multimeric L10(L12)X complex, where L10 forms an elongated spine to which 2 to 4 L12 dimers bind in a sequential fashion. Binds GTP-bound translation factors.

Functionally, forms part of the ribosomal stalk which helps the ribosome interact with GTP-bound translation factors. Is thus essential for accurate translation. The polypeptide is Large ribosomal subunit protein bL12 (Thermosipho melanesiensis (strain DSM 12029 / CIP 104789 / BI429)).